Consider the following 227-residue polypeptide: Cytochrome c oxidase subunit 2 (227 aa).

Topologically, residues 1 to 14 are mitochondrial intermembrane; sequence MAYPFQLGLQDATS. A helical membrane pass occupies residues 15 to 45; that stretch reads PIMEELTNFHDHTLMIVFLISSLVLYIISLM. Topologically, residues 46–59 are mitochondrial matrix; that stretch reads LTTKLTHTSTMDAQ. A helical transmembrane segment spans residues 60–87; the sequence is EVETIWTILPAVILILIALPSLRILYMM. Topologically, residues 88-227 are mitochondrial intermembrane; sequence DEINNPVLTV…YFENWSASMI (140 aa). Positions 161, 196, 198, 200, 204, and 207 each coordinate Cu cation. Glu-198 contacts Mg(2+). The residue at position 218 (Tyr-218) is a Phosphotyrosine.

It belongs to the cytochrome c oxidase subunit 2 family. In terms of assembly, component of the cytochrome c oxidase (complex IV, CIV), a multisubunit enzyme composed of 14 subunits. The complex is composed of a catalytic core of 3 subunits MT-CO1, MT-CO2 and MT-CO3, encoded in the mitochondrial DNA, and 11 supernumerary subunits COX4I, COX5A, COX5B, COX6A, COX6B, COX6C, COX7A, COX7B, COX7C, COX8 and NDUFA4, which are encoded in the nuclear genome. The complex exists as a monomer or a dimer and forms supercomplexes (SCs) in the inner mitochondrial membrane with NADH-ubiquinone oxidoreductase (complex I, CI) and ubiquinol-cytochrome c oxidoreductase (cytochrome b-c1 complex, complex III, CIII), resulting in different assemblies (supercomplex SCI(1)III(2)IV(1) and megacomplex MCI(2)III(2)IV(2)). Found in a complex with TMEM177, COA6, COX18, COX20, SCO1 and SCO2. Interacts with TMEM177 in a COX20-dependent manner. Interacts with COX20. Interacts with COX16. The cofactor is Cu cation.

The protein localises to the mitochondrion inner membrane. The catalysed reaction is 4 Fe(II)-[cytochrome c] + O2 + 8 H(+)(in) = 4 Fe(III)-[cytochrome c] + 2 H2O + 4 H(+)(out). In terms of biological role, component of the cytochrome c oxidase, the last enzyme in the mitochondrial electron transport chain which drives oxidative phosphorylation. The respiratory chain contains 3 multisubunit complexes succinate dehydrogenase (complex II, CII), ubiquinol-cytochrome c oxidoreductase (cytochrome b-c1 complex, complex III, CIII) and cytochrome c oxidase (complex IV, CIV), that cooperate to transfer electrons derived from NADH and succinate to molecular oxygen, creating an electrochemical gradient over the inner membrane that drives transmembrane transport and the ATP synthase. Cytochrome c oxidase is the component of the respiratory chain that catalyzes the reduction of oxygen to water. Electrons originating from reduced cytochrome c in the intermembrane space (IMS) are transferred via the dinuclear copper A center (CU(A)) of subunit 2 and heme A of subunit 1 to the active site in subunit 1, a binuclear center (BNC) formed by heme A3 and copper B (CU(B)). The BNC reduces molecular oxygen to 2 water molecules using 4 electrons from cytochrome c in the IMS and 4 protons from the mitochondrial matrix. In Rattus norvegicus (Rat), this protein is Cytochrome c oxidase subunit 2.